A 506-amino-acid polypeptide reads, in one-letter code: ATP synthase subunit alpha (506 aa).

171–178 (GDRQTGKT) lines the ATP pocket.

The protein belongs to the ATPase alpha/beta chains family. In terms of assembly, F-type ATPases have 2 components, CF(1) - the catalytic core - and CF(0) - the membrane proton channel. CF(1) has five subunits: alpha(3), beta(3), gamma(1), delta(1), epsilon(1). CF(0) has four main subunits: a(1), b(1), b'(1) and c(9-12).

The protein resides in the cellular thylakoid membrane. It carries out the reaction ATP + H2O + 4 H(+)(in) = ADP + phosphate + 5 H(+)(out). Its function is as follows. Produces ATP from ADP in the presence of a proton gradient across the membrane. The alpha chain is a regulatory subunit. This Nostoc sp. (strain PCC 7120 / SAG 25.82 / UTEX 2576) protein is ATP synthase subunit alpha.